A 211-amino-acid chain; its full sequence is Dibenzothiophene metabolism operon protein DoxH (211 aa).

The protein operates within aromatic compound metabolism; naphthalene degradation. In terms of biological role, may be involved in the conversion of 2-hydroxy-4-(2'-oxo-3,5-cyclohexadienyl)-buta-2,4-dienoate to cis-O-hydroxybenzylidenepyruvate. DoxH and doxJ encode different enzymes that may have interchangeable functions. In Pseudomonas sp. (strain C18), this protein is Dibenzothiophene metabolism operon protein DoxH (doxH).